A 622-amino-acid polypeptide reads, in one-letter code: UvrABC system protein C (622 aa).

A GIY-YIG domain is found at 12-91 (SSPGVYIMKD…IKKYRPKYNF (80 aa)). The UVR domain occupies 201–236 (REILKIFRERMSAAAAAEKYEKAARFRDLIRSIEVT).

This sequence belongs to the UvrC family. As to quaternary structure, interacts with UvrB in an incision complex.

The protein localises to the cytoplasm. In terms of biological role, the UvrABC repair system catalyzes the recognition and processing of DNA lesions. UvrC both incises the 5' and 3' sides of the lesion. The N-terminal half is responsible for the 3' incision and the C-terminal half is responsible for the 5' incision. This chain is UvrABC system protein C, found in Geotalea daltonii (strain DSM 22248 / JCM 15807 / FRC-32) (Geobacter daltonii).